A 523-amino-acid polypeptide reads, in one-letter code: NAD(P)H-quinone oxidoreductase subunit 2 (523 aa).

A run of 14 helical transmembrane segments spans residues 29–49 (AIAPEGAVLVAMLATLLVDLA), 57–77 (WVPPICYAGLGTALVLLAQQW), 94–114 (LAIAFRAVVALSTLLSLLISW), 123–143 (PIGEYAAILLAATLGAMLLCG), 147–167 (LVSVFVSLETLSVASYLLAGY), 182–202 (LLVGSAAAAVFLYGASLLYGL), 221–243 (PLAALSLVFVLATVAFKIAAVPF), 255–275 (PTPVVAFLSVGSKAAGFALAL), 291–311 (LLFTVLAVLSMTLGNVVALAQ), 317–337 (MLAYSSIGQAGFVMIGLVCGT), 345–365 (VLYMAAYLFMNLGAFACIILF), 389–409 (LGLSLCLLSLGGIPPMLGFFG), 424–444 (LLVVVGLVTSVVSIYYYISVI), and 477–497 (IALVGCVVVTAVGGILSNPLF).

Belongs to the complex I subunit 2 family. NDH-1 can be composed of about 15 different subunits; different subcomplexes with different compositions have been identified which probably have different functions.

Its subcellular location is the cellular thylakoid membrane. The enzyme catalyses a plastoquinone + NADH + (n+1) H(+)(in) = a plastoquinol + NAD(+) + n H(+)(out). It catalyses the reaction a plastoquinone + NADPH + (n+1) H(+)(in) = a plastoquinol + NADP(+) + n H(+)(out). NDH-1 shuttles electrons from an unknown electron donor, via FMN and iron-sulfur (Fe-S) centers, to quinones in the respiratory and/or the photosynthetic chain. The immediate electron acceptor for the enzyme in this species is believed to be plastoquinone. Couples the redox reaction to proton translocation, and thus conserves the redox energy in a proton gradient. Cyanobacterial NDH-1 also plays a role in inorganic carbon-concentration. This is NAD(P)H-quinone oxidoreductase subunit 2 from Prochlorococcus marinus (strain MIT 9303).